A 256-amino-acid chain; its full sequence is Leucyl/phenylalanyl-tRNA--protein transferase (256 aa).

Residues 232–256 (DGCTGASRHGPGADMRRGDMSREST) form a disordered region. Over residues 245–256 (DMRRGDMSREST) the composition is skewed to basic and acidic residues.

It belongs to the L/F-transferase family.

The protein localises to the cytoplasm. It catalyses the reaction N-terminal L-lysyl-[protein] + L-leucyl-tRNA(Leu) = N-terminal L-leucyl-L-lysyl-[protein] + tRNA(Leu) + H(+). The catalysed reaction is N-terminal L-arginyl-[protein] + L-leucyl-tRNA(Leu) = N-terminal L-leucyl-L-arginyl-[protein] + tRNA(Leu) + H(+). It carries out the reaction L-phenylalanyl-tRNA(Phe) + an N-terminal L-alpha-aminoacyl-[protein] = an N-terminal L-phenylalanyl-L-alpha-aminoacyl-[protein] + tRNA(Phe). Its function is as follows. Functions in the N-end rule pathway of protein degradation where it conjugates Leu, Phe and, less efficiently, Met from aminoacyl-tRNAs to the N-termini of proteins containing an N-terminal arginine or lysine. In Chromohalobacter salexigens (strain ATCC BAA-138 / DSM 3043 / CIP 106854 / NCIMB 13768 / 1H11), this protein is Leucyl/phenylalanyl-tRNA--protein transferase.